Here is a 32-residue protein sequence, read N- to C-terminus: Delta-conotoxin-like CnVID (32 aa).

3 cysteine pairs are disulfide-bonded: cysteine 3-cysteine 18, cysteine 10-cysteine 22, and cysteine 17-cysteine 27. 4-hydroxyproline occurs at positions 6 and 14.

Belongs to the conotoxin O1 superfamily. In terms of tissue distribution, expressed by the venom duct.

Its subcellular location is the secreted. In terms of biological role, delta-conotoxins bind to site 6 of voltage-gated sodium channels (Nav) and inhibit the inactivation process. This toxin acts on Nav1.2/SCN2A, Nav1.3/SCN3A and Nav1.6/SCN8A (EC(50)=1.7 uM). The sequence is that of Delta-conotoxin-like CnVID from Conus consors (Singed cone).